The primary structure comprises 161 residues: Phosphopantetheine adenylyltransferase (161 aa).

T10 provides a ligand contact to substrate. ATP is bound by residues 10–11 and H18; that span reads TF. Positions 42, 74, and 88 each coordinate substrate. ATP contacts are provided by residues 89–91, E99, and 124–130; these read GLR and WSFISSS.

This sequence belongs to the bacterial CoaD family. As to quaternary structure, homohexamer. Mg(2+) serves as cofactor.

The protein resides in the cytoplasm. The catalysed reaction is (R)-4'-phosphopantetheine + ATP + H(+) = 3'-dephospho-CoA + diphosphate. It participates in cofactor biosynthesis; coenzyme A biosynthesis; CoA from (R)-pantothenate: step 4/5. Functionally, reversibly transfers an adenylyl group from ATP to 4'-phosphopantetheine, yielding dephospho-CoA (dPCoA) and pyrophosphate. In Serratia marcescens, this protein is Phosphopantetheine adenylyltransferase.